The sequence spans 212 residues: uncharacterized protein (212 aa).

Residues isoleucine 5–alanine 25 traverse the membrane as a helical segment.

The protein localises to the membrane. This is an uncharacterized protein from Borreliella burgdorferi (strain ATCC 35210 / DSM 4680 / CIP 102532 / B31) (Borrelia burgdorferi).